The sequence spans 560 residues: DNA ligase B (560 aa).

The active-site N6-AMP-lysine intermediate is K124.

This sequence belongs to the NAD-dependent DNA ligase family. LigB subfamily.

The enzyme catalyses NAD(+) + (deoxyribonucleotide)n-3'-hydroxyl + 5'-phospho-(deoxyribonucleotide)m = (deoxyribonucleotide)n+m + AMP + beta-nicotinamide D-nucleotide.. In terms of biological role, catalyzes the formation of phosphodiester linkages between 5'-phosphoryl and 3'-hydroxyl groups in double-stranded DNA using NAD as a coenzyme and as the energy source for the reaction. The chain is DNA ligase B from Escherichia coli (strain K12 / DH10B).